The following is a 337-amino-acid chain: 1-aminocyclopropane-1-carboxylate deaminase (337 aa).

Lys50 is subject to N6-(pyridoxal phosphate)lysine.

It belongs to the ACC deaminase/D-cysteine desulfhydrase family. As to quaternary structure, homotrimer. It depends on pyridoxal 5'-phosphate as a cofactor.

It carries out the reaction 1-aminocyclopropane-1-carboxylate + H2O = 2-oxobutanoate + NH4(+). Its function is as follows. Catalyzes a cyclopropane ring-opening reaction, the irreversible conversion of 1-aminocyclopropane-1-carboxylate (ACC) to ammonia and alpha-ketobutyrate. Allows growth on ACC as a nitrogen source. This is 1-aminocyclopropane-1-carboxylate deaminase from Mesorhizobium japonicum (strain LMG 29417 / CECT 9101 / MAFF 303099) (Mesorhizobium loti (strain MAFF 303099)).